Reading from the N-terminus, the 193-residue chain is MELLKQRILQDGKCYPGGILKVDSFINHQMDSKLMYHVAEEFARLFADSGVNKIVTIEASGIAPAIMVGYIMNLPVVFVKKKQPKTMDNMLTTTVHSFTKSRDYTVCISHDFLTDDDRILFIDDFLAYGNAAQGIIDLAEQASAKIVGMGFIIEKAFQNGREALQERGIRVESLAIIRSLDNCCITIADENED.

Xanthine contacts are provided by L20 and N27. 127-131 provides a ligand contact to 5-phospho-alpha-D-ribose 1-diphosphate; sequence AYGNA. K155 serves as a coordination point for xanthine.

The protein belongs to the purine/pyrimidine phosphoribosyltransferase family. Xpt subfamily. As to quaternary structure, homodimer.

The protein resides in the cytoplasm. The enzyme catalyses XMP + diphosphate = xanthine + 5-phospho-alpha-D-ribose 1-diphosphate. Its pathway is purine metabolism; XMP biosynthesis via salvage pathway; XMP from xanthine: step 1/1. Converts the preformed base xanthine, a product of nucleic acid breakdown, to xanthosine 5'-monophosphate (XMP), so it can be reused for RNA or DNA synthesis. The polypeptide is Xanthine phosphoribosyltransferase (Porphyromonas gingivalis (strain ATCC BAA-308 / W83)).